Consider the following 122-residue polypeptide: NADH-quinone oxidoreductase subunit A (122 aa).

The next 3 membrane-spanning stretches (helical) occupy residues 10-30 (LIVF…LTIG), 67-87 (FALL…WAVV), and 91-111 (LGLF…IGLI).

The protein belongs to the complex I subunit 3 family. As to quaternary structure, NDH-1 is composed of 14 different subunits. Subunits NuoA, H, J, K, L, M, N constitute the membrane sector of the complex.

It is found in the cell membrane. The catalysed reaction is a quinone + NADH + 5 H(+)(in) = a quinol + NAD(+) + 4 H(+)(out). In terms of biological role, NDH-1 shuttles electrons from NADH, via FMN and iron-sulfur (Fe-S) centers, to quinones in the respiratory chain. The immediate electron acceptor for the enzyme in this species is believed to be a menaquinone. Couples the redox reaction to proton translocation (for every two electrons transferred, four hydrogen ions are translocated across the cytoplasmic membrane), and thus conserves the redox energy in a proton gradient. The chain is NADH-quinone oxidoreductase subunit A from Geobacillus thermodenitrificans (strain NG80-2).